The chain runs to 281 residues: N-acetyltransferase ECO1 (281 aa).

The CCHH-type zinc finger occupies 33–57 (VKCDKCEMSYSSTSIEDRAIHEKYH). The interval 86–105 (LSRSTGTITPLNSSPLKKSS) is disordered. The segment covering 95–105 (PLNSSPLKKSS) has biased composition (low complexity). Lys-223 carries the N6-acetyllysine; by autocatalysis modification.

Belongs to the acetyltransferase family. ECO subfamily. As to quaternary structure, binds specifically to CHL12, RFC1, RFC2, RFC3, RFC4, RFC5 and RAD24 when members of an RFC complex. Interacts with CHL1 and MPS3. In terms of processing, autoacetylates in vitro.

Its subcellular location is the nucleus. Functionally, required for establishment of sister chromatid cohesion during S phase but not for its further maintenance during G2 or M phases or for loading the cohesin complex onto DNA. Interacts with the three known alternate replication factor C (RFC) complexes, suggesting that these complexes have essential but redundant activity in cohesion establishment. Acts by acetylating the cohesin complex component SMC3. In vitro, possesses acetyltransferase activity where it can acetylate itself and components of the cohesin complex (MCD1, IRR1 and PDS5), but is unable to acetylate histones. The polypeptide is N-acetyltransferase ECO1 (ECO1) (Saccharomyces cerevisiae (strain ATCC 204508 / S288c) (Baker's yeast)).